Consider the following 410-residue polypeptide: Cytochrome P450 105A3 (410 aa).

Residue C359 participates in heme binding.

Belongs to the cytochrome P450 family. Monomer. It depends on heme as a cofactor.

Catalyzes the hydroxylation of sodium ML-236B carboxylate to pravastatin. The chain is Cytochrome P450 105A3 (cyp105A3) from Streptomyces carbophilus.